We begin with the raw amino-acid sequence, 274 residues long: CDC48-associated ubiquitin-like/zinc finger protein 1 (274 aa).

An AN1-type zinc finger spans residues 12–58 (LDVGKHCAYCRQLDFLPFHCSFCNEDFCSNHRLKEDHHCRWLLEHEE). Positions 18, 21, 31, 34, 39, 42, 48, and 50 each coordinate Zn(2+). The tract at residues 170 to 266 (NRIYIWCYLV…KDLDTLYLVH (97 aa)) is ubiquitin-like. Residue S273 is modified to Phosphoserine.

Interacts (via its ubiquitin-like domain) with CDC48 (via N-terminus). Associates with the 26S proteasome. Specifically interacts with the regulatory particle (RP) subunit RPN2. Exposure to arsenite, a known inducer of protein misfolding resulting in accumulation of polyubiquitinated conjugates, enhances the association with the proteoasome. Binds to ubiquitinated proteins conjugated to a 4 or more molecule ubiquitin chain. Binding to ubiquitinated proteins is zinc-dependent.

It is found in the cytoplasm. Its subcellular location is the nucleus. Functionally, promotes efficient arsenite-induced clearance of stress granules (SGs). May have a role in the ubiquitin-proteasome system (UPS) protecting cells from metalloid-induced proteotoxicity. The polypeptide is CDC48-associated ubiquitin-like/zinc finger protein 1 (Saccharomyces cerevisiae (strain ATCC 204508 / S288c) (Baker's yeast)).